The primary structure comprises 1342 residues: DNA-directed RNA polymerase subunit beta (1342 aa).

The protein belongs to the RNA polymerase beta chain family. As to quaternary structure, the RNAP catalytic core consists of 2 alpha, 1 beta, 1 beta' and 1 omega subunit. When a sigma factor is associated with the core the holoenzyme is formed, which can initiate transcription.

It catalyses the reaction RNA(n) + a ribonucleoside 5'-triphosphate = RNA(n+1) + diphosphate. In terms of biological role, DNA-dependent RNA polymerase catalyzes the transcription of DNA into RNA using the four ribonucleoside triphosphates as substrates. In Buchnera aphidicola subsp. Acyrthosiphon pisum (strain 5A), this protein is DNA-directed RNA polymerase subunit beta.